A 464-amino-acid chain; its full sequence is Argininosuccinate lyase (464 aa).

It belongs to the lyase 1 family. Argininosuccinate lyase subfamily.

The protein localises to the cytoplasm. The enzyme catalyses 2-(N(omega)-L-arginino)succinate = fumarate + L-arginine. It participates in amino-acid biosynthesis; L-arginine biosynthesis; L-arginine from L-ornithine and carbamoyl phosphate: step 3/3. The polypeptide is Argininosuccinate lyase (Crocosphaera subtropica (strain ATCC 51142 / BH68) (Cyanothece sp. (strain ATCC 51142))).